We begin with the raw amino-acid sequence, 443 residues long: ATP-dependent RNA helicase SUB2 (443 aa).

Positions 60 to 88 match the Q motif motif; sequence TGFRDFLLKPELLRAITDCGFEHPSEVQQ. The region spanning 91–266 is the Helicase ATP-binding domain; that stretch reads IPTAILKVDV…KKFMRNPLEV (176 aa). Residue 104 to 111 participates in ATP binding; that stretch reads AKSGLGKT. Positions 213-216 match the DEAD box motif; it reads DECD. One can recognise a Helicase C-terminal domain in the interval 294-439; the sequence is KLNELLDNLE…EYPEEGVDAS (146 aa).

This sequence belongs to the DEAD box helicase family. DECD subfamily.

The protein localises to the nucleus. The enzyme catalyses ATP + H2O = ADP + phosphate + H(+). ATP-binding RNA helicase involved in transcription elongation and required for the export of mRNA out of the nucleus. SUB2 also plays a role in pre-mRNA splicing and spliceosome assembly. May be involved in rDNA and telomeric silencing, and maintenance of genome integrity. This is ATP-dependent RNA helicase SUB2 (SUB2) from Coccidioides immitis (strain RS) (Valley fever fungus).